Consider the following 347-residue polypeptide: Quinolinate synthase (347 aa).

Iminosuccinate is bound by residues histidine 47 and serine 68. Cysteine 113 lines the [4Fe-4S] cluster pocket. Iminosuccinate contacts are provided by residues 139 to 141 (YAN) and serine 156. Cysteine 200 contacts [4Fe-4S] cluster. Iminosuccinate contacts are provided by residues 226–228 (HPE) and threonine 243. A [4Fe-4S] cluster-binding site is contributed by cysteine 297.

The protein belongs to the quinolinate synthase family. Type 1 subfamily. The cofactor is [4Fe-4S] cluster.

It is found in the cytoplasm. The enzyme catalyses iminosuccinate + dihydroxyacetone phosphate = quinolinate + phosphate + 2 H2O + H(+). The protein operates within cofactor biosynthesis; NAD(+) biosynthesis; quinolinate from iminoaspartate: step 1/1. Its function is as follows. Catalyzes the condensation of iminoaspartate with dihydroxyacetone phosphate to form quinolinate. The chain is Quinolinate synthase from Escherichia fergusonii (strain ATCC 35469 / DSM 13698 / CCUG 18766 / IAM 14443 / JCM 21226 / LMG 7866 / NBRC 102419 / NCTC 12128 / CDC 0568-73).